The following is a 343-amino-acid chain: Ribosomal RNA small subunit methyltransferase C (343 aa).

Belongs to the methyltransferase superfamily. RsmC family. Monomer.

Its subcellular location is the cytoplasm. The enzyme catalyses guanosine(1207) in 16S rRNA + S-adenosyl-L-methionine = N(2)-methylguanosine(1207) in 16S rRNA + S-adenosyl-L-homocysteine + H(+). Its function is as follows. Specifically methylates the guanine in position 1207 of 16S rRNA in the 30S particle. In Shigella boydii serotype 4 (strain Sb227), this protein is Ribosomal RNA small subunit methyltransferase C.